The sequence spans 810 residues: Coiled-coil domain-containing protein 15 (810 aa).

Coiled-coil stretches lie at residues valine 65–arginine 89, aspartate 160–threonine 189, and methionine 638–arginine 669.

Interacts with POC5, POC1B, CETN2 and FAM161A.

It is found in the cytoplasm. It localises to the cytoskeleton. The protein localises to the microtubule organizing center. Its subcellular location is the centrosome. The protein resides in the centriole. It is found in the centriolar satellite. Its function is as follows. Plays an important role in primary cilium assembly, maintenance, and length regulation. Interacts with centriole inner scaffold proteins to promote proper centriole size and integrity and assembly of functional cilia. Required for the recruitment of both the inner scaffold protein POC1B and the distal SFI1/CETN2 complex to centrioles. This chain is Coiled-coil domain-containing protein 15 (Ccdc15), found in Mus musculus (Mouse).